Here is a 764-residue protein sequence, read N- to C-terminus: Subtilisin-like protease SBT1.6 (764 aa).

Residues 1 to 20 form the signal peptide; that stretch reads MASSTIVLLLFLSFPFISFA. The Inhibitor I9 domain maps to 46 to 99; sequence HWYSTEFAEESRIVHVYHTVFHGFSAVVTPDEADNLRNHPAVLAVFEDRRRELH. The region spanning 103–606 is the Peptidase S8 domain; it reads SPQFLGLQNQ…SGHLNLGRAM (504 aa). The active-site Charge relay system is aspartate 131. Asparagine 191 carries N-linked (GlcNAc...) asparagine glycosylation. The active-site Charge relay system is the histidine 205. Positions 377–457 constitute a PA domain; it reads SSASLCMENT…NEGDRIKAYA (81 aa). Serine 538 functions as the Charge relay system in the catalytic mechanism. An N-linked (GlcNAc...) asparagine glycan is attached at asparagine 578.

Belongs to the peptidase S8 family. Expressed in roots, leaves and flowers of mature plants.

The chain is Subtilisin-like protease SBT1.6 from Arabidopsis thaliana (Mouse-ear cress).